The following is a 196-amino-acid chain: Adenylate kinase (196 aa).

An ATP-binding site is contributed by 9–17 (GIPGVGKST).

Belongs to the archaeal adenylate kinase family.

The protein resides in the cytoplasm. It catalyses the reaction AMP + ATP = 2 ADP. The chain is Adenylate kinase (adkA) from Pyrococcus abyssi (strain GE5 / Orsay).